A 577-amino-acid polypeptide reads, in one-letter code: MTRLTREHYAKLYGPTTGDRIRLADTDLIIEITEDRCGGPGLAGEEAVFGGGKVLRESMGQSRLTRAGGAPDTVITGAIIIDHWGIIKADIGIRDGRIVGIGKAGNPDIMDGVDPALIVGPSTEIIAGNNRIVTAGGIDCHVHFICPQILPEALSGGITTMIGGGTGPAEGSKATTVTPGAWHLGRMLQALDGWPMNILMLGKGNTVNPDAMWEQLRGGAAGFKLHEDWGTTPAVIDACLRVADEADVQVALHSDTLNETGFVEGTLAAIGGRAIHAYHTEGAGGGHAPDIITVASHPNVMPSSTNPTRPHTVNTLDEHLDMLMVCHHLNAAVPEDLAFAESRIRPSTIAAEDLLHDIGAISMIGSDSQAMGRIGEVVMRTWQTAHVMKKRRGALPGDPSGPNGNDNNRVRRYVAKYTICPAITHGIDHEIGSVEVGKLADLVLWEPAFFGVRPHAVIKGGGIVWAAMGDANASIPTPQPVFPRPMFSAMHAVAAGLAVHFVSPTAIEDDLAARLALRRRLVPTRDVRNRGKADLPLNDAMPDIRVDPDTFTVRIDGEVWEEHPAAELPMAQRYFLF.

One can recognise a Urease domain in the interval 136 to 577 (GGIDCHVHFI…LPMAQRYFLF (442 aa)). Ni(2+)-binding residues include histidine 141, histidine 143, and lysine 224. Residue lysine 224 is modified to N6-carboxylysine. Histidine 226 contacts substrate. Residues histidine 253 and histidine 279 each coordinate Ni(2+). Histidine 327 acts as the Proton donor in catalysis. Aspartate 367 provides a ligand contact to Ni(2+).

It belongs to the metallo-dependent hydrolases superfamily. Urease alpha subunit family. Heterotrimer of UreA (gamma), UreB (beta) and UreC (alpha) subunits. Three heterotrimers associate to form the active enzyme. Requires Ni cation as cofactor. Post-translationally, carboxylation allows a single lysine to coordinate two nickel ions.

It is found in the cytoplasm. It carries out the reaction urea + 2 H2O + H(+) = hydrogencarbonate + 2 NH4(+). It functions in the pathway nitrogen metabolism; urea degradation; CO(2) and NH(3) from urea (urease route): step 1/1. The chain is Urease subunit alpha from Mycobacteroides abscessus (strain ATCC 19977 / DSM 44196 / CCUG 20993 / CIP 104536 / JCM 13569 / NCTC 13031 / TMC 1543 / L948) (Mycobacterium abscessus).